A 370-amino-acid chain; its full sequence is Prolactin-releasing peptide receptor (370 aa).

Residues 1-62 (MASSTTRGPR…LQLVHQLKGL (62 aa)) are Extracellular-facing. 2 N-linked (GlcNAc...) asparagine glycosylation sites follow: Asn-27 and Asn-36. A helical membrane pass occupies residues 63 to 83 (IVLLYSVVVVVGLVGNCLLVL). Over 84 to 101 (VIARVRRLHNVTNFLIGN) the chain is Cytoplasmic. A helical transmembrane segment spans residues 102–122 (LALSDVLMCTACVPLTLAYAF). Residues 123-126 (EPRG) lie on the Extracellular side of the membrane. The chain crosses the membrane as a helical span at residues 127-147 (WVFGGGLCHLVFFLQPVTVYV). Residues Cys-134 and Cys-211 are joined by a disulfide bond. At 148–175 (SVFTLTTIAVDRYVVLVHPLRRRISLRL) the chain is on the cytoplasmic side. The helical transmembrane segment at 176-196 (SAYAVLAIWALSAVLALPAAV) threads the bilayer. Residues 197-225 (HTYHVELKPHDVRLCEEFWGSQERQRQLY) are Extracellular-facing. Residues 226–246 (AWGLLLVTYLLPLLVILLSYV) form a helical membrane-spanning segment. Topologically, residues 247-276 (RVSVKLRNRVVPGCVTQSQADWDRARRRRT) are cytoplasmic. A helical membrane pass occupies residues 277-297 (FCLLVVIVVVFAVCWLPLHVF). The Extracellular portion of the chain corresponds to 298–317 (NLLRDLDPHAIDPYAFGLVQ). The helical transmembrane segment at 318 to 338 (LLCHWLAMSSACYNPFIYAWL) threads the bilayer. At 339–369 (HDSFREELRKLLVAWPRKIAPHGQNMTVSVV) the chain is on the cytoplasmic side. Residues 365–370 (TVSVVI) are required for interaction with GRIP1, GRIP2 and PICK1.

This sequence belongs to the G-protein coupled receptor 1 family. As to quaternary structure, interacts through its C-terminal region with the PDZ domain-containing proteins GRIP1, GRIP2 and PICK1. Interacts with PDZ domains 4 and 5 of GRIP1 and with the PDZ domain of PICK1. As to expression, only detected in the pituitary gland and in all cell types of pituitary adenomas.

It localises to the cell membrane. Its function is as follows. Receptor for prolactin-releasing peptide (PrRP). Implicated in lactation, regulation of food intake and pain-signal processing. This chain is Prolactin-releasing peptide receptor (PRLHR), found in Homo sapiens (Human).